The sequence spans 344 residues: Arginine N-succinyltransferase (344 aa).

Leu-125 provides a ligand contact to succinyl-CoA. His-229 serves as the catalytic Proton donor.

Belongs to the arginine N-succinyltransferase family.

The enzyme catalyses succinyl-CoA + L-arginine = N(2)-succinyl-L-arginine + CoA + H(+). It participates in amino-acid degradation; L-arginine degradation via AST pathway; L-glutamate and succinate from L-arginine: step 1/5. In terms of biological role, catalyzes the transfer of succinyl-CoA to arginine to produce N(2)-succinylarginine. This Escherichia coli O6:H1 (strain CFT073 / ATCC 700928 / UPEC) protein is Arginine N-succinyltransferase.